Reading from the N-terminus, the 865-residue chain is MIKAIIGKIIGTRNDRWIKQYKKKVLAINALEPTYEKMSDDELQNAFEELKKRVRSVEKDLQEKTLLEVLPESFAITREASKRILKMRHFDVQLIGGMVLNDGKIAEMKTGEGKTLVATLAVALNALKGESVYVVTVNDYLAHRDSKEMEPLYHFLGYSVGTITASVRDDDERLEIYSKDIVYGTNNEFGFDYLRDNMKYSLEHKVQKSHAFAIVDEVDSILIDEARTPLIISGPVDRRMENYNKADEVAKSMQVEIDFTIDEKNRTILITEEGIKKAENLFGVDNLYKIENAALSHHLDQALKANYLFFIDKDYIVANNEVVIVDEFTGRLSEGRRFSEGLHQALEAKEGVSIKEESQTLADITFQNYFRMFSKLAGMTGTAQTEATEFLEIYNLEVVSIPTNLAIKRKDLNDLIYKSEKEKFDAVILKIKELHDKGQPVLVGTASIEKSETLHALLKKERIPHTVLNAKQHTKEAEIIKDAGLKGAVTIATNMAGRGVDIKLTDEIKELGGLYIIGTERHESRRIDNQLRGRSGRQGDPGTSQFYLSLEDNLLRIFGSDRIKGVMEKLGLKDGEHIESKLVTRAVENAQKKVENLHFESRKHLLEYDDVANEQRKSVYKFRDELLDVNYDISAKIAENREYALNQIFSKLKAFDHQNLSEEELLGLKNILKEDFNAHVGLEDLKKASPIENFIAEKLKSDYENKMKVLDSEQRSRIERIVYLQILDNAWREHLYTMDNLKTGINLRGYNQKDPLVEYKKESYNLFLELIEDIKMEAIKTFSKIQFEDEQDSSDAERYLDNFSEEREHESVTYRHEEALDEDLNVAMKAFAKTPKRNEPCPCGSGKKYKDCCAKSGPKKGLFAK.

Residues Gln93, 111-115 (GEGKT), and Asp501 contribute to the ATP site. Cys841, Cys843, Cys852, and Cys853 together coordinate Zn(2+).

The protein belongs to the SecA family. As to quaternary structure, monomer and homodimer. Part of the essential Sec protein translocation apparatus which comprises SecA, SecYEG and auxiliary proteins SecDF-YajC and YidC. Zn(2+) serves as cofactor.

It is found in the cell inner membrane. It localises to the cytoplasm. The catalysed reaction is ATP + H2O + cellular proteinSide 1 = ADP + phosphate + cellular proteinSide 2.. In terms of biological role, part of the Sec protein translocase complex. Interacts with the SecYEG preprotein conducting channel. Has a central role in coupling the hydrolysis of ATP to the transfer of proteins into and across the cell membrane, serving as an ATP-driven molecular motor driving the stepwise translocation of polypeptide chains across the membrane. In Helicobacter pylori (strain Shi470), this protein is Protein translocase subunit SecA.